The chain runs to 173 residues: Alpha-crystallin A chain (173 aa).

The residue at position 1 (M1) is an N-acetylmethionine. The segment at 1 to 63 (MDIAIQHPWF…RTVLDSGISE (63 aa)) is required for complex formation with BFSP1 and BFSP2. Deamidated glutamine; partial is present on Q6. The residue at position 45 (S45) is a Phosphoserine. Deamidated glutamine; partial is present on Q50. The sHSP domain occupies 52–162 (LFRTVLDSGI…GHSERAIPVS (111 aa)). K70 carries the N6-acetyllysine modification. At Q90 the chain carries Deamidated glutamine; partial. K99 carries the N6-acetyllysine modification. Position 100 (H100) interacts with Zn(2+). N101 bears the Deamidated asparagine; partial mark. Residues E102 and H107 each coordinate Zn(2+). At S122 the chain carries Phosphoserine. Residue N123 is modified to Deamidated asparagine; partial. The interval 144-173 (PKIPSGVDAGHSERAIPVSREEKPSSAPSS) is disordered. Residues 153–167 (GHSERAIPVSREEKP) are compositionally biased toward basic and acidic residues. H154 serves as a coordination point for Zn(2+). Residue S162 is glycosylated (O-linked (GlcNAc) serine).

The protein belongs to the small heat shock protein (HSP20) family. Heteromer composed of three CRYAA and one CRYAB subunits. Inter-subunit bridging via zinc ions enhances stability, which is crucial as there is no protein turn over in the lens. Can also form homodimers and homotetramers (dimers of dimers) which serve as the building blocks of homooligomers. Within homooligomers, the zinc-binding motif is created from residues of 3 different molecules. His-100 and Glu-102 from one molecule are ligands of the zinc ion, and His-107 and His-154 residues from additional molecules complete the site with tetrahedral coordination geometry. Part of a complex required for lens intermediate filament formation composed of BFSP1, BFSP2 and CRYAA. In terms of processing, acetylation at Lys-70 may increase chaperone activity. Post-translationally, undergoes age-dependent proteolytical cleavage at the C-terminus.

The protein localises to the cytoplasm. Its subcellular location is the nucleus. Contributes to the transparency and refractive index of the lens. Acts as a chaperone, preventing aggregation of various proteins under a wide range of stress conditions. Required for the correct formation of lens intermediate filaments as part of a complex composed of BFSP1, BFSP2 and CRYAA. The protein is Alpha-crystallin A chain (CRYAA) of Giraffa camelopardalis (Giraffe).